The following is an 898-amino-acid chain: Protein translocase subunit SecA (898 aa).

Residues Gln-87, Gly-105–Thr-109, and Asp-512 contribute to the ATP site. Positions Met-855–Ser-865 are enriched in polar residues. A disordered region spans residues Met-855–Tyr-898. Basic and acidic residues predominate over residues Leu-866 to Arg-876. Positions 880, 882, 891, and 892 each coordinate Zn(2+). Over residues Lys-886–Tyr-898 the composition is skewed to basic residues.

Belongs to the SecA family. As to quaternary structure, monomer and homodimer. Part of the essential Sec protein translocation apparatus which comprises SecA, SecYEG and auxiliary proteins SecDF-YajC and YidC. Zn(2+) is required as a cofactor.

It is found in the cell inner membrane. It localises to the cytoplasm. The catalysed reaction is ATP + H2O + cellular proteinSide 1 = ADP + phosphate + cellular proteinSide 2.. Part of the Sec protein translocase complex. Interacts with the SecYEG preprotein conducting channel. Has a central role in coupling the hydrolysis of ATP to the transfer of proteins into and across the cell membrane, serving both as a receptor for the preprotein-SecB complex and as an ATP-driven molecular motor driving the stepwise translocation of polypeptide chains across the membrane. The chain is Protein translocase subunit SecA from Histophilus somni (strain 2336) (Haemophilus somnus).